The sequence spans 240 residues: Probable transcriptional regulatory protein BLi02909/BL01150 (240 aa).

A compositionally biased stretch (basic residues) spans 1 to 14 (MAGHSKWKNIQRRK). The segment at 1 to 21 (MAGHSKWKNIQRRKNAQDAKR) is disordered.

It belongs to the TACO1 family.

The protein localises to the cytoplasm. The protein is Probable transcriptional regulatory protein BLi02909/BL01150 of Bacillus licheniformis (strain ATCC 14580 / DSM 13 / JCM 2505 / CCUG 7422 / NBRC 12200 / NCIMB 9375 / NCTC 10341 / NRRL NRS-1264 / Gibson 46).